Reading from the N-terminus, the 469-residue chain is Trehalose-6-phosphate synthase (469 aa).

Arg-10 contacts D-glucose 6-phosphate. 22–23 contributes to the UDP-alpha-D-glucose binding site; that stretch reads GG. Positions 77 and 131 each coordinate D-glucose 6-phosphate. UDP-alpha-D-glucose-binding residues include Arg-262 and Lys-267. Arg-300 provides a ligand contact to D-glucose 6-phosphate. UDP-alpha-D-glucose is bound at residue 365 to 369; that stretch reads LVAKE.

The protein belongs to the glycosyltransferase 20 family. Homotetramer.

It carries out the reaction D-glucose 6-phosphate + UDP-alpha-D-glucose = alpha,alpha-trehalose 6-phosphate + UDP + H(+). Its pathway is glycan biosynthesis; trehalose biosynthesis. Its function is as follows. Probably involved in the osmoprotection via the biosynthesis of trehalose. Catalyzes the transfer of glucose from UDP-alpha-D-glucose (UDP-Glc) to D-glucose 6-phosphate (Glc-6-P) to form trehalose-6-phosphate. Acts with retention of the anomeric configuration of the UDP-sugar donor. The chain is Trehalose-6-phosphate synthase from Sodalis glossinidius (strain morsitans).